A 259-amino-acid chain; its full sequence is Protein BEAN1 (259 aa).

The helical transmembrane segment at 36-56 (VLVASAVIGVVIILSCITIIV) threads the bilayer. Residues 71–89 (RHRHHRHHHHHHHHRRRRH) show a composition bias toward basic residues. Disordered stretches follow at residues 71–91 (RHRH…RHRE) and 152–259 (VGPG…ERIV). Positions 171–187 (LTDSCPTLDGTSDSGSG) are enriched in polar residues. The segment covering 221–230 (GAGPPSGLLP) has biased composition (low complexity).

Interacts with NEDD4.

The protein localises to the membrane. The protein is Protein BEAN1 (BEAN1) of Homo sapiens (Human).